The chain runs to 1230 residues: Formin-like protein 14 (1230 aa).

Positions M1 to S194 constitute a Phosphatase tensin-type domain. The active-site Phosphocysteine intermediate is the C127. Residues E200 to V339 form the C2 tensin-type domain. 3 disordered regions span residues F412–E432, H460–L822, and E1187–T1230. Residues D484–S496 are compositionally biased toward low complexity. 4 stretches are compositionally biased toward pro residues: residues L503–L514, S524–L535, S545–L556, and S566–P575. The span at N579–N591 shows a compositional bias: polar residues. Composition is skewed to pro residues over residues K592–S630, P637–S649, Q660–R672, A679–T688, P699–K711, P718–P728, and A735–G766. The 399-residue stretch at V809–K1207 folds into the FH2 domain. Positions E1187–V1215 are enriched in basic and acidic residues.

The protein belongs to the formin-like family. Class-II subfamily.

In Arabidopsis thaliana (Mouse-ear cress), this protein is Formin-like protein 14 (FH14).